The following is a 251-amino-acid chain: Hydroxyacylglutathione hydrolase (251 aa).

Zn(2+) contacts are provided by His-58, His-60, Asp-62, His-63, His-116, Asp-135, and His-173.

The protein belongs to the metallo-beta-lactamase superfamily. Glyoxalase II family. As to quaternary structure, monomer. The cofactor is Zn(2+).

It catalyses the reaction an S-(2-hydroxyacyl)glutathione + H2O = a 2-hydroxy carboxylate + glutathione + H(+). The protein operates within secondary metabolite metabolism; methylglyoxal degradation; (R)-lactate from methylglyoxal: step 2/2. Its function is as follows. Thiolesterase that catalyzes the hydrolysis of S-D-lactoyl-glutathione to form glutathione and D-lactic acid. This is Hydroxyacylglutathione hydrolase from Bdellovibrio bacteriovorus (strain ATCC 15356 / DSM 50701 / NCIMB 9529 / HD100).